A 391-amino-acid chain; its full sequence is Coiled-coil domain-containing protein 85C-A (391 aa).

2 coiled-coil regions span residues 23–87 (KCSK…ELCC) and 121–146 (FQQK…KEII). The interval 154 to 212 (NGAGSRSSIDSQSSLSNLNGGSATVRDVGDGSSTSSTGSAGSPDHHHSHIHKPTEGKIT) is disordered. Low complexity-rich tracts occupy residues 158–175 (SRSS…NGGS) and 183–195 (DGSS…SAGS).

It belongs to the CCDC85 family.

Its subcellular location is the cell junction. It is found in the tight junction. The protein resides in the adherens junction. Its function is as follows. May play a role in cell-cell adhesion and epithelium development through its interaction with proteins of the beta-catenin family. May play an important role in cortical development, especially in the maintenance of radial glia. This Danio rerio (Zebrafish) protein is Coiled-coil domain-containing protein 85C-A (ccdc85ca).